The primary structure comprises 101 residues: Nucleoid-associated protein Bind_0255 (101 aa).

This sequence belongs to the YbaB/EbfC family. Homodimer.

It localises to the cytoplasm. The protein resides in the nucleoid. Functionally, binds to DNA and alters its conformation. May be involved in regulation of gene expression, nucleoid organization and DNA protection. The chain is Nucleoid-associated protein Bind_0255 from Beijerinckia indica subsp. indica (strain ATCC 9039 / DSM 1715 / NCIMB 8712).